The chain runs to 267 residues: Hydroxypyruvate/pyruvate aldolase Bphyt_5830 (267 aa).

His-48 serves as the catalytic Proton acceptor. Glu-152 and Asp-178 together coordinate a divalent metal cation.

The protein belongs to the HpcH/HpaI aldolase family. Requires a divalent metal cation as cofactor.

It catalyses the reaction D-glyceraldehyde + 3-hydroxypyruvate = 2-dehydro-D-galactonate. The enzyme catalyses D-glyceraldehyde + 3-hydroxypyruvate = (3R,4S,5R)-3,4,5,6-tetrahydroxy-2-oxohexanoate. The catalysed reaction is D-glyceraldehyde + pyruvate = 2-dehydro-3-deoxy-L-galactonate. Functionally, aldolase which can catalyze in vitro the aldolisation reaction between hydroxypyruvate (HPA) or pyruvate (PA) and D-glyceraldehyde (D-GA). The condensation of hydroxypyruvate and D-glyceraldehyde produces 2-dehydro-D-galactonate as the major product and (3R,4S,5R)-3,4,5,6-tetrahydroxy-2-oxohexanoate. The condensation of pyruvate and D-glyceraldehyde produces 2-dehydro-3-deoxy-L-galactonate. The sequence is that of Hydroxypyruvate/pyruvate aldolase Bphyt_5830 from Paraburkholderia phytofirmans (strain DSM 17436 / LMG 22146 / PsJN) (Burkholderia phytofirmans).